An 897-amino-acid chain; its full sequence is F-BAR domain only protein 1 (897 aa).

Positions 1 to 276 (MIHFFHTLQG…VGFEEYLSSL (276 aa)) are mediates membrane-binding. The F-BAR domain maps to 2–248 (IHFFHTLQGE…NVENIGIENL (247 aa)). Residues 134 to 154 (LQKTREGYHSKCVELERLRKE) adopt a coiled-coil conformation. Residues 475–537 (VEDSGLDSPS…PNPAPSSQSN (63 aa)) form a disordered region. The segment covering 501–520 (PSSQSQSKDSINAASQSRGG) has biased composition (polar residues). Positions 630 to 894 (SWPVAAAITE…RFATGKYMAG (265 aa)) constitute an MHD domain.

Belongs to the FCHO family. In terms of assembly, may oligomerize and form homotetramer. Interacts with acvr1l/alk8; linking this receptor to clathrin-mediated endocytosis.

It is found in the membrane. Its subcellular location is the clathrin-coated pit. May function in an early step of clathrin-mediated endocytosis. May regulate Bmp signaling by regulating clathrin-mediated endocytosis of Bmp receptors. In Danio rerio (Zebrafish), this protein is F-BAR domain only protein 1 (fcho1).